The chain runs to 240 residues: MQTIALVDDDRNILTSVSIALEAEGYKVETYTDGASALEGLLARPPQLAIFDIKMPRMDGMELLRRLRQKSDLPVIFLTSKDEEIDELFGLKMGADDFITKPFSQRLLVERVKAILRRAANREAAAGGTGPAKNADTPSRSLERGQLVMDQERHTCTWKNESVTLTVTEFLILHALAQRPGVVKSRDALMDAAYDEQVYVDDRTIDSHIKRLRKKFKMVDNDFDMIETLYGVGYRFRETA.

The Response regulatory domain occupies 3–116; it reads TIALVDDDRN…LLVERVKAIL (114 aa). Mg(2+) contacts are provided by D8, D9, and D52. D52 carries the post-translational modification 4-aspartylphosphate. A DNA-binding region (ompR/PhoB-type) is located at residues 139-238; it reads SRSLERGQLV…LYGVGYRFRE (100 aa).

The cofactor is Mg(2+). In terms of processing, phosphorylated by ChvG.

Its subcellular location is the cytoplasm. The protein operates within glycan metabolism; exopolysaccharide biosynthesis. Member of a two-component regulatory system ChvG(ExoS)/ChvI involved in regulating the production of succinoglycan. The chain is Transcriptional regulatory protein ChvI (chvI) from Rhizobium meliloti (strain 1021) (Ensifer meliloti).